A 373-amino-acid chain; its full sequence is MHNESPIKRRKSTRIYVGNVPVGDGAPIAVQSMTNTRTTDVEATVKQIKSLERVGVDIVRVSIPTMDAAEAFKLIKQQANVPLVADIHFDYRIALKVAEYGVDCLRINPGNIGNEARIREVVAAARDKNIPIRIGVNGGSLEKDIQEKYGEPTPEALLESAMRHVDILNRLNFDQFKISVKASDVFLAVGAYRLLAQEIEQPLHLGITEAGGARAGSVKSAIGLGILLSEGIGDTLRISLAADPVEEVKVGFDILKALRIRSRGINFIACPTCSRQEFDVIGTVNALEQRLEDLLTPMDVSIIGCVVNGPGEAEVSTLGVTGARTKSGFYEDGIRQKVRLDNADMIDQLEAKIRAKASMLDENKRIGISQLDK.

The [4Fe-4S] cluster site is built by Cys270, Cys273, Cys305, and Glu312.

This sequence belongs to the IspG family. It depends on [4Fe-4S] cluster as a cofactor.

It carries out the reaction (2E)-4-hydroxy-3-methylbut-2-enyl diphosphate + oxidized [flavodoxin] + H2O + 2 H(+) = 2-C-methyl-D-erythritol 2,4-cyclic diphosphate + reduced [flavodoxin]. Its pathway is isoprenoid biosynthesis; isopentenyl diphosphate biosynthesis via DXP pathway; isopentenyl diphosphate from 1-deoxy-D-xylulose 5-phosphate: step 5/6. Its function is as follows. Converts 2C-methyl-D-erythritol 2,4-cyclodiphosphate (ME-2,4cPP) into 1-hydroxy-2-methyl-2-(E)-butenyl 4-diphosphate. The protein is 4-hydroxy-3-methylbut-2-en-1-yl diphosphate synthase (flavodoxin) of Photorhabdus laumondii subsp. laumondii (strain DSM 15139 / CIP 105565 / TT01) (Photorhabdus luminescens subsp. laumondii).